The sequence spans 395 residues: Elongation factor Tu (395 aa).

The tr-type G domain occupies 10-204 (KPHVNVGTIG…AVDNWVPLPE (195 aa)). A G1 region spans residues 19-26 (GHVDHGKT). 19–26 (GHVDHGKT) contacts GTP. Residue threonine 26 participates in Mg(2+) binding. Positions 60-64 (GITIN) are G2. The G3 stretch occupies residues 81–84 (DCPG). Residues 81–85 (DCPGH) and 136–139 (NKCD) contribute to the GTP site. The G4 stretch occupies residues 136–139 (NKCD). Positions 174–176 (SAL) are G5.

Belongs to the TRAFAC class translation factor GTPase superfamily. Classic translation factor GTPase family. EF-Tu/EF-1A subfamily. In terms of assembly, monomer.

The protein resides in the cytoplasm. The catalysed reaction is GTP + H2O = GDP + phosphate + H(+). In terms of biological role, GTP hydrolase that promotes the GTP-dependent binding of aminoacyl-tRNA to the A-site of ribosomes during protein biosynthesis. The sequence is that of Elongation factor Tu from Porphyromonas gingivalis (strain ATCC 33277 / DSM 20709 / CIP 103683 / JCM 12257 / NCTC 11834 / 2561).